A 116-amino-acid chain; its full sequence is U16-barytoxin-Tl1a (116 aa).

An N-terminal signal peptide occupies residues 1–20 (MKTIIVFLSLLVLATKFGDA). A propeptide spanning residues 21–74 (KEGVNQKQKKEVTQNEFREEYLNEMAAMSLVQQLEAIERALFENEAGRNSRQKR) is cleaved from the precursor. 3 disulfides stabilise this stretch: Cys-75-Cys-90, Cys-82-Cys-95, and Cys-89-Cys-110.

This sequence belongs to the neurotoxin 14 (magi-1) family. 06 (ICK-Trit) subfamily. As to expression, expressed by the venom gland.

The protein localises to the secreted. Its function is as follows. Ion channel inhibitor. This is U16-barytoxin-Tl1a from Trittame loki (Brush-footed trapdoor spider).